The primary structure comprises 432 residues: Adenylosuccinate synthetase (432 aa).

Residues 11-17 (GDEGKGK) and 39-41 (GHT) each bind GTP. The Proton acceptor role is filled by Asp-12. Positions 12 and 39 each coordinate Mg(2+). IMP is bound by residues 12-15 (DEGK), 37-40 (NAGH), Thr-134, Arg-148, Asn-230, Thr-245, and Arg-309. Residue His-40 is the Proton donor of the active site. 305 to 311 (VTTGRKR) is a binding site for substrate. Residues Arg-311, 337–339 (KLD), and 419–421 (GTG) contribute to the GTP site.

It belongs to the adenylosuccinate synthetase family. As to quaternary structure, homodimer. Requires Mg(2+) as cofactor.

It localises to the cytoplasm. It catalyses the reaction IMP + L-aspartate + GTP = N(6)-(1,2-dicarboxyethyl)-AMP + GDP + phosphate + 2 H(+). Its pathway is purine metabolism; AMP biosynthesis via de novo pathway; AMP from IMP: step 1/2. Functionally, plays an important role in the de novo pathway and in the salvage pathway of purine nucleotide biosynthesis. Catalyzes the first committed step in the biosynthesis of AMP from IMP. The polypeptide is Adenylosuccinate synthetase (Candida glabrata (strain ATCC 2001 / BCRC 20586 / JCM 3761 / NBRC 0622 / NRRL Y-65 / CBS 138) (Yeast)).